The sequence spans 284 residues: Ribosomal RNA small subunit methyltransferase A (284 aa).

Residues asparagine 26, leucine 28, glycine 53, glutamate 74, aspartate 97, and asparagine 127 each coordinate S-adenosyl-L-methionine.

It belongs to the class I-like SAM-binding methyltransferase superfamily. rRNA adenine N(6)-methyltransferase family. RsmA subfamily.

The protein localises to the cytoplasm. The enzyme catalyses adenosine(1518)/adenosine(1519) in 16S rRNA + 4 S-adenosyl-L-methionine = N(6)-dimethyladenosine(1518)/N(6)-dimethyladenosine(1519) in 16S rRNA + 4 S-adenosyl-L-homocysteine + 4 H(+). Its function is as follows. Specifically dimethylates two adjacent adenosines (A1518 and A1519) in the loop of a conserved hairpin near the 3'-end of 16S rRNA in the 30S particle. May play a critical role in biogenesis of 30S subunits. The protein is Ribosomal RNA small subunit methyltransferase A of Anaeromyxobacter dehalogenans (strain 2CP-C).